Here is a 55-residue protein sequence, read N- to C-terminus: MPGNLLAYYKLKLAKSVSKTVSALLCKCVAPEDNDGDRYLQFNNNCNFIYIYVVK.

This is an uncharacterized protein from Orgyia pseudotsugata multicapsid polyhedrosis virus (OpMNPV).